We begin with the raw amino-acid sequence, 147 residues long: Large ribosomal subunit protein bL21 (147 aa).

Positions 125–147 (EEVEAAPKAKKAAPKAKKEATKE) are disordered.

It belongs to the bacterial ribosomal protein bL21 family. In terms of assembly, part of the 50S ribosomal subunit. Contacts protein L20.

This protein binds to 23S rRNA in the presence of protein L20. This is Large ribosomal subunit protein bL21 from Flavobacterium johnsoniae (strain ATCC 17061 / DSM 2064 / JCM 8514 / BCRC 14874 / CCUG 350202 / NBRC 14942 / NCIMB 11054 / UW101) (Cytophaga johnsonae).